Here is a 476-residue protein sequence, read N- to C-terminus: MGIKIYNTLTRQKEEFKPLREGEVRMYVCGPTVYDYTHIGHARTYIAFDVIRRYLEHKGYTVLMVMNFTDIDDKIIKRANETGEDPKELAEKFLKYFLEDMKALKVKPADIYPRVTEHIQDIIDFIRKLQEKGYAYEGSDGVYFEVRKFKDYGKLSKVKLEDLVKGARVEPGEGKKNPEDFALWKKAKPGEPKWESPWGEGRPGWHIECSTMSTKYLGESFDIHGGGSDLIFPHHENEIAQTEACTGHEWVRYWMHTGFLMVNGEKMSKSLGNFVTIREALERYDPEVIRLFVLQRHYRSPLDYTEEGLEHAKNNLERLYNTLENIRVAMERAEISFKWGEEEFEAYEAIRDGRKKFYDAMDDDFNTAEALKAVFEVSNAINRYLTQVEKPKESILRKAWEFFKMVSEVFGIFEDYFREQKAGEEEALIKLLIDVRAQLRKERKFDLADKIRDELRNLGIQLEDTPQGTVWKRIKV.

A Zn(2+)-binding site is contributed by C29. A 'HIGH' region motif is present at residues 31–41; the sequence is PTVYDYTHIGH. Residues C209, H234, and E238 each contribute to the Zn(2+) site. The 'KMSKS' region signature appears at 266-270; the sequence is KMSKS. K269 is a binding site for ATP.

This sequence belongs to the class-I aminoacyl-tRNA synthetase family. Requires Zn(2+) as cofactor.

It localises to the cytoplasm. It catalyses the reaction tRNA(Cys) + L-cysteine + ATP = L-cysteinyl-tRNA(Cys) + AMP + diphosphate. This is Cysteine--tRNA ligase from Thermococcus kodakarensis (strain ATCC BAA-918 / JCM 12380 / KOD1) (Pyrococcus kodakaraensis (strain KOD1)).